The sequence spans 435 residues: Phospholipase A1 EG1, chloroplastic/mitochondrial (435 aa).

Residues 1–31 (MTLPRQCAAACRTGGGGGGVVRCRAVAAAGG) constitute a chloroplast and mitochondrion transit peptide. The GXSXG motif lies at 264 to 268 (GHSMG). The Acyl-ester intermediate role is filled by serine 266. Catalysis depends on charge relay system residues aspartate 324 and histidine 371.

The protein belongs to the AB hydrolase superfamily. Lipase family.

The protein resides in the mitochondrion. It localises to the plastid. The protein localises to the chloroplast. It carries out the reaction a 1,2-diacyl-sn-glycero-3-phosphocholine + H2O = a 2-acyl-sn-glycero-3-phosphocholine + a fatty acid + H(+). Its function is as follows. Phospholipase that releases free fatty acids from phospholipids. Catalyzes the initial step of jasmonate (JA) biosynthesis. Required for the biosynthesis of endogenous JA in seedling, inflorescence and spikelets. Not essential for JA biosynthesis after wounding. Mediates spikelet development and specification of empty-glume identity. Functions in a high temperature-dependent manner to maintain floral developmental robustness under heat stress conditions. Functions by safeguarding the expression of several floral identity genes, such as MADS1, MADS6 and G1. This chain is Phospholipase A1 EG1, chloroplastic/mitochondrial, found in Oryza sativa subsp. indica (Rice).